A 542-amino-acid polypeptide reads, in one-letter code: Chaperonin GroEL 1 (542 aa).

ATP contacts are provided by residues 29 to 32 (TLGP), 86 to 90 (DGTTT), Gly-413, 477 to 479 (NAA), and Asp-493.

It belongs to the chaperonin (HSP60) family. In terms of assembly, forms a cylinder of 14 subunits composed of two heptameric rings stacked back-to-back. Interacts with the co-chaperonin GroES.

Its subcellular location is the cytoplasm. It carries out the reaction ATP + H2O + a folded polypeptide = ADP + phosphate + an unfolded polypeptide.. Together with its co-chaperonin GroES, plays an essential role in assisting protein folding. The GroEL-GroES system forms a nano-cage that allows encapsulation of the non-native substrate proteins and provides a physical environment optimized to promote and accelerate protein folding. This is Chaperonin GroEL 1 from Renibacterium salmoninarum (strain ATCC 33209 / DSM 20767 / JCM 11484 / NBRC 15589 / NCIMB 2235).